We begin with the raw amino-acid sequence, 204 residues long: dTTP/UTP pyrophosphatase (204 aa).

Aspartate 68 serves as the catalytic Proton acceptor.

The protein belongs to the Maf family. YhdE subfamily. A divalent metal cation is required as a cofactor.

Its subcellular location is the cytoplasm. The enzyme catalyses dTTP + H2O = dTMP + diphosphate + H(+). It carries out the reaction UTP + H2O = UMP + diphosphate + H(+). In terms of biological role, nucleoside triphosphate pyrophosphatase that hydrolyzes dTTP and UTP. May have a dual role in cell division arrest and in preventing the incorporation of modified nucleotides into cellular nucleic acids. The chain is dTTP/UTP pyrophosphatase from Thermotoga petrophila (strain ATCC BAA-488 / DSM 13995 / JCM 10881 / RKU-1).